The primary structure comprises 419 residues: Tyrosine--tRNA ligase (419 aa).

Tyr34 provides a ligand contact to L-tyrosine. The short motif at 39-48 (PSGDSMHIGH) is the 'HIGH' region element. Residues Tyr168 and Gln172 each coordinate L-tyrosine. Positions 230–234 (KFGKS) match the 'KMSKS' region motif. Lys233 contributes to the ATP binding site. Residues 352-418 (ANLVDWLVTL…GKKKYFLVSY (67 aa)) form the S4 RNA-binding domain.

It belongs to the class-I aminoacyl-tRNA synthetase family. TyrS type 1 subfamily. Homodimer.

It localises to the cytoplasm. The enzyme catalyses tRNA(Tyr) + L-tyrosine + ATP = L-tyrosyl-tRNA(Tyr) + AMP + diphosphate + H(+). Functionally, catalyzes the attachment of tyrosine to tRNA(Tyr) in a two-step reaction: tyrosine is first activated by ATP to form Tyr-AMP and then transferred to the acceptor end of tRNA(Tyr). The sequence is that of Tyrosine--tRNA ligase from Listeria monocytogenes serovar 1/2a (strain ATCC BAA-679 / EGD-e).